Reading from the N-terminus, the 257-residue chain is Large ribosomal subunit protein uL2 (257 aa).

Residues 207–230 (VEHPFGGGNHQHIGKPSTIRRDAP) are disordered.

Belongs to the universal ribosomal protein uL2 family. In terms of assembly, component of the large ribosomal subunit.

It is found in the cytoplasm. Functionally, component of the large ribosomal subunit. The ribosome is a large ribonucleoprotein complex responsible for the synthesis of proteins in the cell. This Danio rerio (Zebrafish) protein is Large ribosomal subunit protein uL2 (rpl8).